Reading from the N-terminus, the 349-residue chain is Bifunctional protein FolKE (349 aa).

The interval Met1–Asp226 is 2-amino-4-hydroxy-6-hydroxymethyldihydropteridine pyrophosphokinase. The segment at Asp226–Leu349 is GTP cyclohydrolase 1.

It in the N-terminal section; belongs to the HPPK family. This sequence in the C-terminal section; belongs to the GTP cyclohydrolase I family. As to quaternary structure, homomer.

It catalyses the reaction 6-hydroxymethyl-7,8-dihydropterin + ATP = (7,8-dihydropterin-6-yl)methyl diphosphate + AMP + H(+). It carries out the reaction GTP + H2O = 7,8-dihydroneopterin 3'-triphosphate + formate + H(+). Its pathway is cofactor biosynthesis; 7,8-dihydroneopterin triphosphate biosynthesis; 7,8-dihydroneopterin triphosphate from GTP: step 1/1. It participates in cofactor biosynthesis; tetrahydrofolate biosynthesis; 2-amino-4-hydroxy-6-hydroxymethyl-7,8-dihydropteridine diphosphate from 7,8-dihydroneopterin triphosphate: step 4/4. This is Bifunctional protein FolKE (folKE) from Lactococcus lactis subsp. lactis (strain IL1403) (Streptococcus lactis).